The following is a 42-amino-acid chain: Photosystem I reaction center subunit IX (42 aa).

The helical transmembrane segment at 8 to 28 (YLSTAPVLLTIWLSFTAALVI) threads the bilayer.

It belongs to the PsaJ family.

The protein localises to the plastid. Its subcellular location is the chloroplast thylakoid membrane. Its function is as follows. May help in the organization of the PsaE and PsaF subunits. The polypeptide is Photosystem I reaction center subunit IX (Guillardia theta (Cryptophyte)).